The primary structure comprises 463 residues: MKVLDRSAFKKTINVYSIEIKPNQINNLNKCLKNYYFKNRRCKITEEKISDNVKLFLNPALIKNFDDFSENTKIELKNLGITKDMFSNEIITLDYDYWKLNEVLKAILPKDEPPLTSYSIIGHIVHLNLKDHLIDYKYIIAEVLKDKVSVAKTVVNKTNKIDNVYRNFEMEVLCGEPDFIASVIEYDTKFEFDFSKVYWNPRLSTEHNRIVNLVNHGDVLFDVFAGVGPFSIRAAKKNCLVHANDLNPDSFKWLNHNINLNKKAKGWITTYNKDGSDFILNDFKSNMLKIWSDSNFLGQIHVVMNLPAKALSFLKYFKGLFDEQDLKEIKKDHLEKHLPIIYCYFFAKKDESLDEIFKTHLEYKFDENEYEFNFVRNVSNGKNMHRVTFQMPLSILMIDNSDISEPLPKRISKSLKAKTKAKEYTGNLKKIKETLNKNISKIDSDFLKLQNDISKKKEKPDDK.

Residues His207, Asp245–Leu246, Asp274–Gly275, and Asn305 contribute to the S-adenosyl-L-methionine site.

It belongs to the class I-like SAM-binding methyltransferase superfamily. TRM5/TYW2 family. As to quaternary structure, monomer.

It localises to the mitochondrion matrix. It is found in the nucleus. Its subcellular location is the cytoplasm. It carries out the reaction guanosine(37) in tRNA + S-adenosyl-L-methionine = N(1)-methylguanosine(37) in tRNA + S-adenosyl-L-homocysteine + H(+). Functionally, specifically methylates the N1 position of guanosine-37 in various cytoplasmic and mitochondrial tRNAs. Methylation is not dependent on the nature of the nucleoside 5' of the target nucleoside. This is the first step in the biosynthesis of wybutosine (yW), a modified base adjacent to the anticodon of tRNAs and required for accurate decoding. In Pediculus humanus subsp. corporis (Body louse), this protein is tRNA (guanine(37)-N(1))-methyltransferase.